A 505-amino-acid polypeptide reads, in one-letter code: GDP-Man:Man(3)GlcNAc(2)-PP-Dol alpha-1,2-mannosyltransferase (505 aa).

The Lumenal segment spans residues 1 to 4 (MSTM). The helical transmembrane segment at 5–25 (LWVVVAAVLLFVLPVVRVPML) threads the bilayer. Topologically, residues 26 to 130 (DLTRRNIIRW…KWVDGSTWKH (105 aa)) are cytoplasmic. Positions 131 to 151 (LTLVGQAMGSMLLTIEALLRF) form an intramembrane region, helical. Topologically, residues 152-374 (VPDIWLDTMG…FGINAMWNEH (223 aa)) are cytoplasmic. The helical intramembrane region spans 375-395 (FGIAVVEYAAAGLISLVHASA). At 396-505 (GPLLDIIVPW…EHKTSRLGSN (110 aa)) the chain is on the cytoplasmic side.

It belongs to the glycosyltransferase group 1 family.

It localises to the endoplasmic reticulum membrane. It carries out the reaction an alpha-D-Man-(1-&gt;3)-[alpha-D-Man-(1-&gt;6)]-beta-D-Man-(1-&gt;4)-beta-D-GlcNAc-(1-&gt;4)-alpha-D-GlcNAc-diphospho-di-trans,poly-cis-dolichol + 2 GDP-alpha-D-mannose = an alpha-D-Man-(1-&gt;2)-alpha-D-Man-(1-&gt;2)-alpha-D-Man-(1-&gt;3)-[alpha-D-Man-(1-&gt;6)]-beta-D-Man-(1-&gt;4)-beta-D-GlcNAc-(1-&gt;4)-alpha-D-GlcNAc-diphospho-di-trans,poly-cis-dolichol + 2 GDP + 2 H(+). It participates in protein modification; protein glycosylation. Its function is as follows. GDP-Man:Man(3)GlcNAc(2)-PP-Dol alpha-1,2-mannosyltransferase that operates in the biosynthetic pathway of dolichol-linked oligosaccharides, the glycan precursors employed in protein asparagine (N)-glycosylation. The assembly of dolichol-linked oligosaccharides begins on the cytosolic side of the endoplasmic reticulum membrane and finishes in its lumen. The sequential addition of sugars to dolichol pyrophosphate produces dolichol-linked oligosaccharides containing fourteen sugars, including two GlcNAcs, nine mannoses and three glucoses. Once assembled, the oligosaccharide is transferred from the lipid to nascent proteins by oligosaccharyltransferases. Catalyzes, on the cytoplasmic face of the endoplasmic reticulum, the addition of the fourth and fifth mannose residues to the dolichol-linked oligosaccharide chain, to produce Man(5)GlcNAc(2)-PP-dolichol core oligosaccharide. The sequence is that of GDP-Man:Man(3)GlcNAc(2)-PP-Dol alpha-1,2-mannosyltransferase (ALG11) from Candida glabrata (strain ATCC 2001 / BCRC 20586 / JCM 3761 / NBRC 0622 / NRRL Y-65 / CBS 138) (Yeast).